The primary structure comprises 183 residues: Photosystem I assembly protein Ycf4 (183 aa).

2 helical membrane-spanning segments follow: residues 17–39 and 59–81; these read NYLLLIIMLGGGISFFIVGFLSY and FIPQGITMIFYGTMAICLSIYIY.

This sequence belongs to the Ycf4 family.

It localises to the plastid. Its subcellular location is the chloroplast thylakoid membrane. Functionally, seems to be required for the assembly of the photosystem I complex. The polypeptide is Photosystem I assembly protein Ycf4 (Cyanidium caldarium (Red alga)).